The primary structure comprises 36 residues: Photosystem I reaction center subunit VIII (36 aa).

A helical transmembrane segment spans residues 8–28 (SFFVPLVCLVFPAIAMAFLFV).

Belongs to the PsaI family.

It localises to the plastid. The protein resides in the chloroplast thylakoid membrane. May help in the organization of the PsaL subunit. The chain is Photosystem I reaction center subunit VIII from Chara vulgaris (Common stonewort).